Reading from the N-terminus, the 156-residue chain is Small ribosomal subunit protein uS7 (156 aa).

Belongs to the universal ribosomal protein uS7 family. As to quaternary structure, part of the 30S ribosomal subunit. Contacts proteins S9 and S11.

One of the primary rRNA binding proteins, it binds directly to 16S rRNA where it nucleates assembly of the head domain of the 30S subunit. Is located at the subunit interface close to the decoding center, probably blocks exit of the E-site tRNA. This is Small ribosomal subunit protein uS7 from Bradyrhizobium diazoefficiens (strain JCM 10833 / BCRC 13528 / IAM 13628 / NBRC 14792 / USDA 110).